Consider the following 174-residue polypeptide: Crossover junction endodeoxyribonuclease RuvC (174 aa).

Catalysis depends on residues Asp8, Glu67, and Asp139. Mg(2+)-binding residues include Asp8, Glu67, and Asp139.

Belongs to the RuvC family. In terms of assembly, homodimer which binds Holliday junction (HJ) DNA. The HJ becomes 2-fold symmetrical on binding to RuvC with unstacked arms; it has a different conformation from HJ DNA in complex with RuvA. In the full resolvosome a probable DNA-RuvA(4)-RuvB(12)-RuvC(2) complex forms which resolves the HJ. The cofactor is Mg(2+).

It is found in the cytoplasm. The enzyme catalyses Endonucleolytic cleavage at a junction such as a reciprocal single-stranded crossover between two homologous DNA duplexes (Holliday junction).. The RuvA-RuvB-RuvC complex processes Holliday junction (HJ) DNA during genetic recombination and DNA repair. Endonuclease that resolves HJ intermediates. Cleaves cruciform DNA by making single-stranded nicks across the HJ at symmetrical positions within the homologous arms, yielding a 5'-phosphate and a 3'-hydroxyl group; requires a central core of homology in the junction. The consensus cleavage sequence is 5'-(A/T)TT(C/G)-3'. Cleavage occurs on the 3'-side of the TT dinucleotide at the point of strand exchange. HJ branch migration catalyzed by RuvA-RuvB allows RuvC to scan DNA until it finds its consensus sequence, where it cleaves and resolves the cruciform DNA. The protein is Crossover junction endodeoxyribonuclease RuvC of Pseudomonas putida (strain ATCC 700007 / DSM 6899 / JCM 31910 / BCRC 17059 / LMG 24140 / F1).